Consider the following 48-residue polypeptide: Cytochrome b559 subunit beta (48 aa).

A helical membrane pass occupies residues 23-39 (WLAVHALAIPSVFFLGA). His-27 serves as a coordination point for heme.

The protein belongs to the PsbE/PsbF family. In terms of assembly, heterodimer of an alpha subunit and a beta subunit. PSII is composed of 1 copy each of membrane proteins PsbA, PsbB, PsbC, PsbD, PsbE, PsbF, PsbH, PsbI, PsbJ, PsbK, PsbL, PsbM, PsbT, PsbX, PsbY, Psb30/Ycf12, peripheral proteins PsbO, CyanoQ (PsbQ), PsbU, PsbV and a large number of cofactors. It forms dimeric complexes. Requires heme b as cofactor.

The protein localises to the cellular thylakoid membrane. In terms of biological role, this b-type cytochrome is tightly associated with the reaction center of photosystem II (PSII). PSII is a light-driven water:plastoquinone oxidoreductase that uses light energy to abstract electrons from H(2)O, generating O(2) and a proton gradient subsequently used for ATP formation. It consists of a core antenna complex that captures photons, and an electron transfer chain that converts photonic excitation into a charge separation. This chain is Cytochrome b559 subunit beta, found in Prochlorococcus marinus (strain MIT 9515).